The chain runs to 425 residues: Dihydroorotase (425 aa).

Residues H61 and H63 each coordinate Zn(2+). Substrate-binding positions include 63 to 65 and N95; that span reads HLR. The Zn(2+) site is built by K146, H175, H224, and D293. Residue K146 is modified to N6-carboxylysine. D293 is a catalytic residue. Residues H297 and 311 to 312 contribute to the substrate site; that span reads PG.

This sequence belongs to the metallo-dependent hydrolases superfamily. DHOase family. Class I DHOase subfamily. Zn(2+) serves as cofactor.

It catalyses the reaction (S)-dihydroorotate + H2O = N-carbamoyl-L-aspartate + H(+). Its pathway is pyrimidine metabolism; UMP biosynthesis via de novo pathway; (S)-dihydroorotate from bicarbonate: step 3/3. In terms of biological role, catalyzes the reversible cyclization of carbamoyl aspartate to dihydroorotate. The sequence is that of Dihydroorotase from Aeropyrum pernix (strain ATCC 700893 / DSM 11879 / JCM 9820 / NBRC 100138 / K1).